We begin with the raw amino-acid sequence, 496 residues long: Glycerol kinase 2 (496 aa).

An ADP-binding site is contributed by Thr11. 3 residues coordinate ATP: Thr11, Thr12, and Ser13. Position 11 (Thr11) interacts with sn-glycerol 3-phosphate. Arg15 lines the ADP pocket. Sn-glycerol 3-phosphate-binding residues include Arg81, Glu82, Tyr133, and Asp242. Positions 81, 82, 133, 242, and 243 each coordinate glycerol. Positions 264 and 307 each coordinate ADP. The ATP site is built by Thr264, Gly307, Gln311, and Gly408. Gly408 and Asn412 together coordinate ADP.

The protein belongs to the FGGY kinase family.

It carries out the reaction glycerol + ATP = sn-glycerol 3-phosphate + ADP + H(+). The protein operates within polyol metabolism; glycerol degradation via glycerol kinase pathway; sn-glycerol 3-phosphate from glycerol: step 1/1. Its activity is regulated as follows. Inhibited by fructose 1,6-bisphosphate (FBP). Key enzyme in the regulation of glycerol uptake and metabolism. Catalyzes the phosphorylation of glycerol to yield sn-glycerol 3-phosphate. The polypeptide is Glycerol kinase 2 (Thermotoga maritima (strain ATCC 43589 / DSM 3109 / JCM 10099 / NBRC 100826 / MSB8)).